A 275-amino-acid chain; its full sequence is Shikimate dehydrogenase (NADP(+)) (275 aa).

Residues 19-21 and Thr66 each bind shikimate; that span reads SKS. The Proton acceptor role is filled by Lys70. Glu82 is a binding site for NADP(+). Shikimate-binding residues include Asn91 and Asp106. NADP(+)-binding positions include 130-134, 154-159, and Met217; these read GAGGA and NRTASK. Tyr219 provides a ligand contact to shikimate. Gly241 contributes to the NADP(+) binding site.

The protein belongs to the shikimate dehydrogenase family. As to quaternary structure, homodimer.

The catalysed reaction is shikimate + NADP(+) = 3-dehydroshikimate + NADPH + H(+). It participates in metabolic intermediate biosynthesis; chorismate biosynthesis; chorismate from D-erythrose 4-phosphate and phosphoenolpyruvate: step 4/7. Functionally, involved in the biosynthesis of the chorismate, which leads to the biosynthesis of aromatic amino acids. Catalyzes the reversible NADPH linked reduction of 3-dehydroshikimate (DHSA) to yield shikimate (SA). This chain is Shikimate dehydrogenase (NADP(+)), found in Colwellia psychrerythraea (strain 34H / ATCC BAA-681) (Vibrio psychroerythus).